The following is a 195-amino-acid chain: Peroxisomal membrane protein 2 (195 aa).

Residues 1–30 (MAPAASRLRAEAGLGALPRRALAQYLLFLR) lie on the Cytoplasmic side of the membrane. The helical transmembrane segment at 31 to 51 (LYPVLTKAATSGILSALGNFL) threads the bilayer. Residues 52 to 75 (AQMIEKKRKKENSRSLDVGGPLRY) are Peroxisomal-facing. A helical transmembrane segment spans residues 76–96 (AVYGFFFTGPLSHFFYFFMEH). Topologically, residues 97-114 (WIPPEVPLAGLRRLLLDR) are cytoplasmic. Residues 115–135 (LVFAPAFLMLFFLIMNFLEGK) form a helical membrane-spanning segment. At 136–173 (DASAFAAKMRGGFWPALRMNWRVWTPLQFININYVPLK) the chain is on the peroxisomal side. The helical transmembrane segment at 174-194 (FRVLFANLAALFWYAYLASLG) threads the bilayer.

This sequence belongs to the peroxisomal membrane protein PXMP2/4 family. As to quaternary structure, interacts with PEX19 and SIVA1.

The protein resides in the peroxisome membrane. Its function is as follows. Seems to be involved in pore-forming activity and may contribute to the unspecific permeability of the peroxisomal membrane. This Homo sapiens (Human) protein is Peroxisomal membrane protein 2 (PXMP2).